Reading from the N-terminus, the 274-residue chain is Acyl-[acyl-carrier-protein]--UDP-N-acetylglucosamine O-acyltransferase (274 aa).

It belongs to the transferase hexapeptide repeat family. LpxA subfamily. In terms of assembly, homotrimer.

It is found in the cytoplasm. It carries out the reaction a (3R)-hydroxyacyl-[ACP] + UDP-N-acetyl-alpha-D-glucosamine = a UDP-3-O-[(3R)-3-hydroxyacyl]-N-acetyl-alpha-D-glucosamine + holo-[ACP]. Its pathway is glycolipid biosynthesis; lipid IV(A) biosynthesis; lipid IV(A) from (3R)-3-hydroxytetradecanoyl-[acyl-carrier-protein] and UDP-N-acetyl-alpha-D-glucosamine: step 1/6. Functionally, involved in the biosynthesis of lipid A, a phosphorylated glycolipid that anchors the lipopolysaccharide to the outer membrane of the cell. The chain is Acyl-[acyl-carrier-protein]--UDP-N-acetylglucosamine O-acyltransferase from Bartonella quintana (strain Toulouse) (Rochalimaea quintana).